The chain runs to 326 residues: Fos-related antigen 2 (326 aa).

Residue M1 is modified to N-acetylmethionine. Positions 1–39 are disordered; that stretch reads MYQDYPGNFDTSSRGSSGSPAHAESYSSGGGGQQKFRVD. The span at 9–19 shows a compositional bias: polar residues; the sequence is FDTSSRGSSGS. K35 is covalently cross-linked (Glycyl lysine isopeptide (Lys-Gly) (interchain with G-Cter in SUMO2)). An N6-acetyllysine; alternate modification is found at K104. A Glycyl lysine isopeptide (Lys-Gly) (interchain with G-Cter in SUMO2); alternate cross-link involves residue K104. 3 disordered regions span residues 111 to 131, 193 to 244, and 289 to 326; these read GRRR…RIRR, ISPE…QRSV, and EQES…LLAL. S120 carries the phosphoserine modification. The region spanning 124-187 is the bZIP domain; sequence EEKRRIRRER…EKLEFMLVAH (64 aa). A basic motif region spans residues 126 to 128; that stretch reads KRR. The tract at residues 129–136 is leucine-zipper; the sequence is IRRERNKL. A Phosphoserine modification is found at S200. Over residues 201–211 the composition is skewed to polar residues; it reads PPTSGLQSLRG. A Glycyl lysine isopeptide (Lys-Gly) (interchain with G-Cter in SUMO2); alternate cross-link involves residue K222. K222 participates in a covalent cross-link: Glycyl lysine isopeptide (Lys-Gly) (interchain with G-Cter in SUMO1); alternate. S230 carries the post-translational modification Phosphoserine. K239 is covalently cross-linked (Glycyl lysine isopeptide (Lys-Gly) (interchain with G-Cter in SUMO2)). S308 and S320 each carry phosphoserine. Low complexity predominate over residues 308–320; it reads SSSGDQSSDSLNS.

The protein belongs to the bZIP family. Fos subfamily. Heterodimer. Interacts with the BAF multiprotein chromatin-remodeling complex subunits SMARCB1 and SMARCD1. Interacts with ARID1A and JUN. In terms of tissue distribution, expressed in the brain cortex. Expressed at night in pineal gland (at protein level). Also expressed in osteoblasts (at protein level).

It localises to the nucleus. In terms of biological role, controls osteoclast survival and size. As a dimer with JUN, activates LIF transcription. Activates CEBPB transcription in PGE2-activated osteoblasts. This chain is Fos-related antigen 2 (Fosl2), found in Rattus norvegicus (Rat).